We begin with the raw amino-acid sequence, 353 residues long: MALLSTVRGATWGRLVTRHFSHAARHGERPGGEELSRLLLDDLVPTSRLELLFGMTPCLLALQAARRSVARLLLQAGKAGLQGKRAELLRMAEARDIPVLRPRRQKLDTMCRYQVHQGVCMEVSPLRPRPWREAGEASPGDDPQQLWLVLDGIQDPRNFGAVLRSAHFLGVDKVITSRRNSCPLTPVVSKSSAGAMEVMDVFSTDDLTGFLQTKAQQGWLVAGTVGCPSTEDPQSSEIPIMSCLEFLWERPTLLVLGNEGSGLSQEVQASCQLLLTILPRRQLPPGLESLNVSVAAGILLHSICSQRKGFPTEGERRQLLQDPQEPSARSEGLSMAQHPGLSSGPEKERQNEG.

The N-terminal 20 residues, 1-20 (MALLSTVRGATWGRLVTRHF), are a transit peptide targeting the mitochondrion. The interval 311-353 (PTEGERRQLLQDPQEPSARSEGLSMAQHPGLSSGPEKERQNEG) is disordered.

This sequence belongs to the class IV-like SAM-binding methyltransferase superfamily. RNA methyltransferase TrmH family.

It is found in the mitochondrion matrix. It catalyses the reaction guanosine(1145) in 16S rRNA + S-adenosyl-L-methionine = 2'-O-methylguanosine(1145) in 16S rRNA + S-adenosyl-L-homocysteine + H(+). Functionally, S-adenosyl-L-methionine-dependent 2'-O-ribose methyltransferase that catalyzes the formation of 2'-O-methylguanosine at position 1145 (Gm1145) in the 16S mitochondrial large subunit ribosomal RNA (mtLSU rRNA), a universally conserved modification in the peptidyl transferase domain of the mtLSU rRNA. This chain is rRNA methyltransferase 1, mitochondrial, found in Homo sapiens (Human).